The following is a 459-amino-acid chain: Bifunctional protein GlmU (459 aa).

The pyrophosphorylase stretch occupies residues 1–230; that stretch reads MSNRFAVILA…FDETLGVNDR (230 aa). Residues 9–12, K23, Q73, and 78–79 contribute to the UDP-N-acetyl-alpha-D-glucosamine site; these read LAAG and GT. D103 is a Mg(2+) binding site. Residues G140, E155, N170, and N228 each coordinate UDP-N-acetyl-alpha-D-glucosamine. Residue N228 coordinates Mg(2+). A linker region spans residues 231 to 251; it reads VALSQAEIIMKNRINRKNMVN. Residues 252–459 are N-acetyltransferase; that stretch reads GVTIIDPSNT…VDQLLNKKKS (208 aa). The UDP-N-acetyl-alpha-D-glucosamine site is built by R333 and K351. H363 acts as the Proton acceptor in catalysis. Residues Y366 and N377 each contribute to the UDP-N-acetyl-alpha-D-glucosamine site. Acetyl-CoA contacts are provided by residues 386 to 387, A423, and R440; that span reads NY.

In the N-terminal section; belongs to the N-acetylglucosamine-1-phosphate uridyltransferase family. This sequence in the C-terminal section; belongs to the transferase hexapeptide repeat family. Homotrimer. Requires Mg(2+) as cofactor.

The protein resides in the cytoplasm. It catalyses the reaction alpha-D-glucosamine 1-phosphate + acetyl-CoA = N-acetyl-alpha-D-glucosamine 1-phosphate + CoA + H(+). The catalysed reaction is N-acetyl-alpha-D-glucosamine 1-phosphate + UTP + H(+) = UDP-N-acetyl-alpha-D-glucosamine + diphosphate. The protein operates within nucleotide-sugar biosynthesis; UDP-N-acetyl-alpha-D-glucosamine biosynthesis; N-acetyl-alpha-D-glucosamine 1-phosphate from alpha-D-glucosamine 6-phosphate (route II): step 2/2. It functions in the pathway nucleotide-sugar biosynthesis; UDP-N-acetyl-alpha-D-glucosamine biosynthesis; UDP-N-acetyl-alpha-D-glucosamine from N-acetyl-alpha-D-glucosamine 1-phosphate: step 1/1. Its pathway is bacterial outer membrane biogenesis; LPS lipid A biosynthesis. Functionally, catalyzes the last two sequential reactions in the de novo biosynthetic pathway for UDP-N-acetylglucosamine (UDP-GlcNAc). The C-terminal domain catalyzes the transfer of acetyl group from acetyl coenzyme A to glucosamine-1-phosphate (GlcN-1-P) to produce N-acetylglucosamine-1-phosphate (GlcNAc-1-P), which is converted into UDP-GlcNAc by the transfer of uridine 5-monophosphate (from uridine 5-triphosphate), a reaction catalyzed by the N-terminal domain. The sequence is that of Bifunctional protein GlmU from Bacillus cereus (strain ZK / E33L).